The primary structure comprises 381 residues: Putative 8-amino-7-oxononanoate synthase (381 aa).

R22 is a substrate binding site. 109–110 (GF) serves as a coordination point for pyridoxal 5'-phosphate. H134 is a substrate binding site. Residues S182, 207 to 210 (DDAH), and 233 to 236 (TLSK) contribute to the pyridoxal 5'-phosphate site. K236 is subject to N6-(pyridoxal phosphate)lysine. T345 lines the substrate pocket.

It belongs to the class-II pyridoxal-phosphate-dependent aminotransferase family. BioF subfamily. Homodimer. It depends on pyridoxal 5'-phosphate as a cofactor.

It catalyses the reaction 6-carboxyhexanoyl-[ACP] + L-alanine + H(+) = (8S)-8-amino-7-oxononanoate + holo-[ACP] + CO2. The protein operates within cofactor biosynthesis; biotin biosynthesis. Catalyzes the decarboxylative condensation of pimeloyl-[acyl-carrier protein] and L-alanine to produce 8-amino-7-oxononanoate (AON), [acyl-carrier protein], and carbon dioxide. In Acidiphilium cryptum (strain JF-5), this protein is Putative 8-amino-7-oxononanoate synthase (bioF).